The primary structure comprises 651 residues: Probable ATP-dependent helicase MJ0942 (651 aa).

In terms of domain architecture, Helicase ATP-binding spans 6-255 (YIKEKFPYPK…EIIEKYLTSR (250 aa)). 41–48 (APTGVGKT) is a binding site for ATP. Residues Cys102, Cys149, and Cys154 each contribute to the [4Fe-4S] cluster site. The short motif at 195–198 (DEAH) is the DEAH box element. In terms of domain architecture, Helicase C-terminal spans 449-638 (NLLKILEAIN…NYEVMSLDMA (190 aa)).

This sequence belongs to the helicase family. DinG subfamily. The cofactor is [4Fe-4S] cluster.

The catalysed reaction is Couples ATP hydrolysis with the unwinding of duplex DNA at the replication fork by translocating in the 5'-3' direction. This creates two antiparallel DNA single strands (ssDNA). The leading ssDNA polymer is the template for DNA polymerase III holoenzyme which synthesizes a continuous strand.. It carries out the reaction ATP + H2O = ADP + phosphate + H(+). Functionally, might be a 5'-3' DNA helicase. The protein is Probable ATP-dependent helicase MJ0942 of Methanocaldococcus jannaschii (strain ATCC 43067 / DSM 2661 / JAL-1 / JCM 10045 / NBRC 100440) (Methanococcus jannaschii).